A 189-amino-acid polypeptide reads, in one-letter code: Ornithine decarboxylase antizyme 2 (189 aa).

Position 186 is a phosphoserine (S186).

The protein belongs to the ODC antizyme family. Interacts with ODC1 and thereby sterically blocks ODC homodimerization. Interacts with AZIN2; this interaction disrupts the interaction between the antizyme and ODC1.

It localises to the nucleus. Functionally, ornithine decarboxylase (ODC) antizyme protein that negatively regulates ODC activity and intracellular polyamine biosynthesis and uptake in response to increased intracellular polyamine levels. Binds to ODC monomers, inhibiting the assembly of the functional ODC homodimers. Does not target the ODC monomers for degradation, which allows a protein synthesis-independent restoration of ODC activity. Involved in the translocation of AZIN2 from ER-Golgi intermediate compartment (ERGIC) to the cytosol. This is Ornithine decarboxylase antizyme 2 (OAZ2) from Homo sapiens (Human).